The following is a 634-amino-acid chain: Sodium-dependent neutral amino acid transporter B(0)AT1 (634 aa).

Residues 1-41 are Cytoplasmic-facing; that stretch reads MVRLVLPNPGLEERIPSLDELEVIEKEEAGSRPKWDNKAQY. Phosphoserine is present on serine 17. The chain crosses the membrane as a helical span at residues 42–62; that stretch reads MLTCVGFCVGLGNVWRFPYLC. Residues 63–67 lie on the Extracellular side of the membrane; the sequence is QSHGG. A helical membrane pass occupies residues 68–88; sequence GAFMIPFLILLVFEGIPLLYL. The Cytoplasmic portion of the chain corresponds to 89-119; that stretch reads EFAIGQRLRKGSMGVWSSIHPALKGIGIASM. Residues 120-140 traverse the membrane as a helical segment; it reads FVSFMVGLYYNTIIAWVMWYF. The Extracellular portion of the chain corresponds to 141–192; sequence FNSFQEPLPWSECPLNQNQTGYVEECAKSSSVDYFWYRETLNISTSISDSGS. N-linked (GlcNAc...) asparagine glycans are attached at residues asparagine 158 and asparagine 182. The helical transmembrane segment at 193 to 213 threads the bilayer; that stretch reads IQWWILLCLTCAWSVLYVCII. Residues 214–221 lie on the Cytoplasmic side of the membrane; it reads RGIETTGK. A helical membrane pass occupies residues 222–242; the sequence is AVYITSTLPYVVLTIFLIRGL. Topologically, residues 243 to 268 are extracellular; sequence TLKGATNGIVFLFTPNITELSNPNTW. Residue asparagine 258 is glycosylated (N-linked (GlcNAc...) asparagine). The chain crosses the membrane as a helical span at residues 269-289; that stretch reads LDAGAQVFYSFSLAFGGLISF. At 290–304 the chain is on the cytoplasmic side; that stretch reads SSYNSVHNNCEMDSV. Residues 305–325 form a helical membrane-spanning segment; sequence IVSVINGFTSVYAATVVYSII. Over 326–413 the chain is Extracellular; sequence GFRATERFDD…TEAITKMPVS (88 aa). 2 N-linked (GlcNAc...) asparagine glycosylation sites follow: asparagine 354 and asparagine 368. The chain crosses the membrane as a helical span at residues 414 to 434; sequence PLWSVLFFIMLFCLGLSSMFG. At 435–456 the chain is on the cytoplasmic side; it reads NMEGVVVPLQDLNITPKKWPKE. Residues 457–477 traverse the membrane as a helical segment; it reads LLTGLICLGTYLIAFIFTLNS. At 478–487 the chain is on the extracellular side; the sequence is GQYWLSLLDS. The chain crosses the membrane as a helical span at residues 488–508; sequence FAGSIPLLIIAFCEMFAVVYV. At 509 to 531 the chain is on the cytoplasmic side; it reads YGVDRFNKDIEFMIGHKPNIFWQ. A helical transmembrane segment spans residues 532 to 552; that stretch reads VTWRVVSPLIMLVIFLFFFVI. The Extracellular portion of the chain corresponds to 553–581; sequence EVNKTLMYSIWDPNYEEFPKSQKIPYPNW. A glycan (N-linked (GlcNAc...) asparagine) is linked at asparagine 555. A helical membrane pass occupies residues 582–602; sequence VYAVVVTVAGVPCLSIPCFAI. The Cytoplasmic segment spans residues 603 to 634; sequence YKFIRNCCQKSDDHHGLVNTLSTASVNGDLKN. At serine 627 the chain carries Phosphoserine.

It belongs to the sodium:neurotransmitter symporter (SNF) (TC 2.A.22) family. SLC6A19 subfamily. As to quaternary structure, interacts in a tissue-specific manner with ACE2 in small intestine and with CLTRN in the kidney. Interacts with CLTRN; this interaction is required for trafficking of SLC6A19 to the plasma membrane and for its catalytic activation in kidneys. Interacts with ACE2; this interaction is required for trafficking of SLC6A19 to the plasma membrane and for its catalytic activation in intestine. Interacts with ANPEP; the interaction positively regulates its amino acid transporter activity. In terms of tissue distribution, predominantly expressed in kidney and small intestine (at protein level). Expressed in the intestinal brush border (at protein level). Expression not observed in other organs, such as lung, skeletal muscle, brain, liver and pancreas. In kidney, expression is localized in the renal cortex but not in the medulla. Substantial amounts of expression in the proximal tubules. The distal nephron segments and the glomeruli are consistently negative. In the small intestine, expression is exclusively localized in villus enterocytes. High resolution of the hybridization-positive villi reveals a gradient of expression with the highest levels in apical cells. Not detected in crypt cells or in any other cell types of the small intestine.

It is found in the cell membrane. The enzyme catalyses L-alanine(in) + Na(+)(in) = L-alanine(out) + Na(+)(out). It catalyses the reaction L-cysteine(in) + Na(+)(in) = L-cysteine(out) + Na(+)(out). The catalysed reaction is L-glutamine(in) + Na(+)(in) = L-glutamine(out) + Na(+)(out). It carries out the reaction glycine(in) + Na(+)(in) = glycine(out) + Na(+)(out). The enzyme catalyses L-isoleucine(in) + Na(+)(in) = L-isoleucine(out) + Na(+)(out). It catalyses the reaction L-leucine(in) + Na(+)(in) = L-leucine(out) + Na(+)(out). The catalysed reaction is L-methionine(in) + Na(+)(in) = L-methionine(out) + Na(+)(out). It carries out the reaction L-phenylalanine(in) + Na(+)(in) = L-phenylalanine(out) + Na(+)(out). The enzyme catalyses L-serine(in) + Na(+)(in) = L-serine(out) + Na(+)(out). It catalyses the reaction L-tryptophan(in) + Na(+)(in) = L-tryptophan(out) + Na(+)(out). The catalysed reaction is L-tyrosine(in) + Na(+)(in) = L-tyrosine(out) + Na(+)(out). It carries out the reaction L-valine(in) + Na(+)(in) = L-valine(out) + Na(+)(out). Transporter that mediates resorption of neutral amino acids across the apical membrane of renal and intestinal epithelial cells. This uptake is sodium-dependent and chloride-independent. Requires CLTRN in kidney or ACE2 in intestine for cell surface expression and amino acid transporter activity. This Mus musculus (Mouse) protein is Sodium-dependent neutral amino acid transporter B(0)AT1 (Slc6a19).